The chain runs to 151 residues: FAD synthase (151 aa).

ATP contacts are provided by residues 21 to 22, 26 to 29, and Asp104; these read TF and HPGH.

The protein belongs to the archaeal FAD synthase family. Homodimer. It depends on a divalent metal cation as a cofactor.

The catalysed reaction is FMN + ATP + H(+) = FAD + diphosphate. Its pathway is cofactor biosynthesis; FAD biosynthesis; FAD from FMN: step 1/1. In terms of biological role, catalyzes the transfer of the AMP portion of ATP to flavin mononucleotide (FMN) to produce flavin adenine dinucleotide (FAD) coenzyme. The sequence is that of FAD synthase from Methanosarcina acetivorans (strain ATCC 35395 / DSM 2834 / JCM 12185 / C2A).